A 360-amino-acid polypeptide reads, in one-letter code: Phenylalanine--tRNA ligase alpha subunit (360 aa).

Residue glutamate 260 participates in Mg(2+) binding.

This sequence belongs to the class-II aminoacyl-tRNA synthetase family. Phe-tRNA synthetase alpha subunit type 1 subfamily. In terms of assembly, tetramer of two alpha and two beta subunits. Requires Mg(2+) as cofactor.

It is found in the cytoplasm. It carries out the reaction tRNA(Phe) + L-phenylalanine + ATP = L-phenylalanyl-tRNA(Phe) + AMP + diphosphate + H(+). The sequence is that of Phenylalanine--tRNA ligase alpha subunit from Bradyrhizobium sp. (strain ORS 278).